The primary structure comprises 256 residues: Ubiquinone/menaquinone biosynthesis C-methyltransferase UbiE (256 aa).

Over residues 1–12 (MNDQRKGDHAEP) the composition is skewed to basic and acidic residues. The interval 1–23 (MNDQRKGDHAEPTTHFGYQDVPE) is disordered. Residues threonine 79, aspartate 100, and 128–129 (DA) each bind S-adenosyl-L-methionine.

Belongs to the class I-like SAM-binding methyltransferase superfamily. MenG/UbiE family.

The enzyme catalyses a 2-demethylmenaquinol + S-adenosyl-L-methionine = a menaquinol + S-adenosyl-L-homocysteine + H(+). It catalyses the reaction a 2-methoxy-6-(all-trans-polyprenyl)benzene-1,4-diol + S-adenosyl-L-methionine = a 5-methoxy-2-methyl-3-(all-trans-polyprenyl)benzene-1,4-diol + S-adenosyl-L-homocysteine + H(+). It participates in quinol/quinone metabolism; menaquinone biosynthesis; menaquinol from 1,4-dihydroxy-2-naphthoate: step 2/2. It functions in the pathway cofactor biosynthesis; ubiquinone biosynthesis. Functionally, methyltransferase required for the conversion of demethylmenaquinol (DMKH2) to menaquinol (MKH2) and the conversion of 2-polyprenyl-6-methoxy-1,4-benzoquinol (DDMQH2) to 2-polyprenyl-3-methyl-6-methoxy-1,4-benzoquinol (DMQH2). This Pseudomonas putida (strain ATCC 700007 / DSM 6899 / JCM 31910 / BCRC 17059 / LMG 24140 / F1) protein is Ubiquinone/menaquinone biosynthesis C-methyltransferase UbiE.